A 181-amino-acid chain; its full sequence is Acireductone dioxygenase 2 (181 aa).

Residues His97, His99, Glu103, and His141 each contribute to the Fe(2+) site. The Ni(2+) site is built by His97, His99, Glu103, and His141.

It belongs to the acireductone dioxygenase (ARD) family. In terms of assembly, monomer. The cofactor is Fe(2+). Requires Ni(2+) as cofactor.

It catalyses the reaction 1,2-dihydroxy-5-(methylsulfanyl)pent-1-en-3-one + O2 = 3-(methylsulfanyl)propanoate + CO + formate + 2 H(+). The catalysed reaction is 1,2-dihydroxy-5-(methylsulfanyl)pent-1-en-3-one + O2 = 4-methylsulfanyl-2-oxobutanoate + formate + 2 H(+). Its pathway is amino-acid biosynthesis; L-methionine biosynthesis via salvage pathway; L-methionine from S-methyl-5-thio-alpha-D-ribose 1-phosphate: step 5/6. Functionally, catalyzes 2 different reactions between oxygen and the acireductone 1,2-dihydroxy-3-keto-5-methylthiopentene (DHK-MTPene) depending upon the metal bound in the active site. Fe-containing acireductone dioxygenase (Fe-ARD) produces formate and 2-keto-4-methylthiobutyrate (KMTB), the alpha-ketoacid precursor of methionine in the methionine recycle pathway. Ni-containing acireductone dioxygenase (Ni-ARD) produces methylthiopropionate, carbon monoxide and formate, and does not lie on the methionine recycle pathway. This chain is Acireductone dioxygenase 2, found in Pectobacterium atrosepticum (strain SCRI 1043 / ATCC BAA-672) (Erwinia carotovora subsp. atroseptica).